Consider the following 149-residue polypeptide: Alpha-crystallin A chain (149 aa).

The 111-residue stretch at 28–138 (LLRGFMDSGI…SHSERPIPVS (111 aa)) folds into the sHSP domain. The Zn(2+) site is built by H55, H76, E78, H83, H91, and H130. The disordered stretch occupies residues 125-149 (NLVSSHSERPIPVSREEKPTSAPSS). Over residues 130-143 (HSERPIPVSREEKP) the composition is skewed to basic and acidic residues. S138 is a glycosylation site (O-linked (GlcNAc) serine).

It belongs to the small heat shock protein (HSP20) family. Heteropolymer composed of three CRYAA and one CRYAB subunits. Inter-subunit bridging via zinc ions enhances stability, which is crucial as there is no protein turn over in the lens. Can also form homodimers and homotetramers (dimers of dimers) which serve as the building blocks of homooligomers. Within homooligomers, the zinc-binding motif is created from residues of 3 different molecules. His-76 and Glu-78 from one molecule are ligands of the zinc ion, and His-83 and His-130 residues from additional molecules complete the site with tetrahedral coordination geometry.

It localises to the cytoplasm. It is found in the nucleus. In terms of biological role, contributes to the transparency and refractive index of the lens. May act as a chaperone, preventing aggregation of various proteins under a wide range of stress conditions. This chain is Alpha-crystallin A chain (CRYAA), found in Rana temporaria (European common frog).